A 136-amino-acid polypeptide reads, in one-letter code: Purkinje cell protein 2 homolog (136 aa).

2 disordered regions span residues 1–64 and 86–136; these read MMDQ…PEMD and SSLP…TQAP. The GoLoco 1 domain occupies 23 to 45; it reads QEGFFNLLSHVQGDRMEGQRCSL. Residues 49–59 show a composition bias toward polar residues; it reads PGQTTKSQSDP. Residues 63-85 form the GoLoco 2 domain; it reads MDSLMDMLASTQGRRMDDQRVTV. The span at 107 to 117 shows a compositional bias: polar residues; sequence LSPQPLLTPQD. S127 bears the Phosphoserine mark.

Its function is as follows. May function as a cell-type specific modulator for G protein-mediated cell signaling. The protein is Purkinje cell protein 2 homolog (PCP2) of Homo sapiens (Human).